A 280-amino-acid chain; its full sequence is Nitrogenase iron-iron protein alpha chain (280 aa).

Positions 5, 31, and 94 each coordinate [8Fe-7S] cluster. A [8Fe-9S-C-homocitryl] cluster-binding site is contributed by Cys213.

This sequence belongs to the NifD/NifK/NifE/NifN family. Hexamer of two alpha, two beta, and two delta chains. Requires [8Fe-7S] cluster as cofactor. [8Fe-9S-C-homocitryl] cluster serves as cofactor.

The catalysed reaction is N2 + 8 reduced [2Fe-2S]-[ferredoxin] + 16 ATP + 16 H2O = H2 + 8 oxidized [2Fe-2S]-[ferredoxin] + 2 NH4(+) + 16 ADP + 16 phosphate + 6 H(+). This iron-iron protein is part of the nitrogenase complex that catalyzes the key enzymatic reactions in nitrogen fixation. Other nitrogenase complexes utilize a molybdenum-iron protein or a vanadium-iron protein. In Heliomicrobium gestii (Heliobacterium gestii), this protein is Nitrogenase iron-iron protein alpha chain (anfD).